The sequence spans 365 residues: UPF0718 protein MJ0584 (365 aa).

Transmembrane regions (helical) follow at residues 6–26, 32–52, 67–87, 108–128, 130–150, 174–194, 201–221, 245–265, 282–302, 308–328, and 344–364; these read MSFI…YLNV, LLMA…NFII, VAAV…PLFA, AINV…IGFL, AVFA…IFKS, ITFF…PKLF, LYDG…ILAV, IVFP…AIIP, FIAS…VPII, LGMG…LSIP, and TYLG…GIIL.

The protein belongs to the UPF0718 family.

The protein localises to the cell membrane. This is UPF0718 protein MJ0584 from Methanocaldococcus jannaschii (strain ATCC 43067 / DSM 2661 / JAL-1 / JCM 10045 / NBRC 100440) (Methanococcus jannaschii).